The sequence spans 246 residues: Endonuclease NucS (246 aa).

Belongs to the NucS endonuclease family.

Its subcellular location is the cytoplasm. Cleaves both 3' and 5' ssDNA extremities of branched DNA structures. The polypeptide is Endonuclease NucS (Corynebacterium urealyticum (strain ATCC 43042 / DSM 7109)).